The following is a 53-amino-acid chain: Lectin alpha chain (53 aa).

This sequence belongs to the leguminous lectin family. Tetramer of two alpha and two beta chains.

The protein is Lectin alpha chain of Lathyrus clymenum (Spanish vetchling).